A 216-amino-acid polypeptide reads, in one-letter code: Thiopurine S-methyltransferase (216 aa).

4 residues coordinate S-adenosyl-L-methionine: W10, L45, E66, and R123.

Belongs to the class I-like SAM-binding methyltransferase superfamily. TPMT family.

It localises to the cytoplasm. The enzyme catalyses S-adenosyl-L-methionine + a thiopurine = S-adenosyl-L-homocysteine + a thiopurine S-methylether.. In Pseudomonas entomophila (strain L48), this protein is Thiopurine S-methyltransferase.